The following is a 551-amino-acid chain: Trehalose-6-phosphate hydrolase (551 aa).

Asp-200 serves as the catalytic Nucleophile. Glu-251 (proton donor) is an active-site residue.

The protein belongs to the glycosyl hydrolase 13 family.

Its subcellular location is the cytoplasm. The catalysed reaction is alpha,alpha-trehalose 6-phosphate + H2O = D-glucose 6-phosphate + D-glucose. Functionally, hydrolyzes trehalose-6-phosphate to glucose and glucose 6-phosphate. Can also very effectively hydrolyze p-nitrophenyl-alpha-D-glucopyranoside, but it does not recognize trehalose, sucrose, maltose, isomaltose, or maltodextrins. In Escherichia coli (strain K12), this protein is Trehalose-6-phosphate hydrolase (treC).